We begin with the raw amino-acid sequence, 398 residues long: Large ribosomal subunit protein uL3 (398 aa).

Positions 1–10 are enriched in basic and acidic residues; the sequence is MSHRKFEAPR. A disordered region spans residues 1 to 34; it reads MSHRKFEAPRHGNLGFRPRKRAARHQGKVKSFPK. Over residues 17–28 the composition is skewed to basic residues; sequence RPRKRAARHQGK.

This sequence belongs to the universal ribosomal protein uL3 family.

The protein resides in the cytoplasm. The L3 protein is a component of the large subunit of cytoplasmic ribosomes. This chain is Large ribosomal subunit protein uL3 (rpl3), found in Dictyostelium discoideum (Social amoeba).